Reading from the N-terminus, the 497-residue chain is RNA-splicing ligase RtcB homolog (497 aa).

Aspartate 111, cysteine 114, histidine 219, histidine 251, and histidine 345 together coordinate Mn(2+). 218 to 222 (NHYAE) serves as a coordination point for GMP. Residues 345 to 346 (HN), 394 to 397 (GGTM), serine 401, 420 to 423 (HGAG), and lysine 496 each bind GMP. Residue histidine 420 is the GMP-histidine intermediate of the active site.

Belongs to the RtcB family. Catalytic component of the tRNA-splicing ligase complex. Mn(2+) is required as a cofactor.

The catalysed reaction is a 3'-end 3'-phospho-ribonucleotide-RNA + a 5'-end dephospho-ribonucleoside-RNA + GTP = a ribonucleotidyl-ribonucleotide-RNA + GMP + diphosphate. It catalyses the reaction a 3'-end 2',3'-cyclophospho-ribonucleotide-RNA + a 5'-end dephospho-ribonucleoside-RNA + GTP + H2O = a ribonucleotidyl-ribonucleotide-RNA + GMP + diphosphate + H(+). In terms of biological role, catalytic subunit of the tRNA-splicing ligase complex that acts by directly joining spliced tRNA halves to mature-sized tRNAs by incorporating the precursor-derived splice junction phosphate into the mature tRNA as a canonical 3',5'-phosphodiester. May act as an RNA ligase with broad substrate specificity, and may function toward other RNAs. The sequence is that of RNA-splicing ligase RtcB homolog from Monosiga brevicollis (Choanoflagellate).